We begin with the raw amino-acid sequence, 396 residues long: OTU domain-containing protein 3 (396 aa).

A disordered region spans residues 1–49; sequence MSRKQAAKSRPGSGGRRAEAERKRDERAARRALAKERRNRPDPGGSGCE. Basic and acidic residues predominate over residues 16-41; the sequence is RRAEAERKRDERAARRALAKERRNRP. The region spanning 64 to 188 is the OTU domain; it reads LKLREVPGDG…GEHYDSVRRI (125 aa). Position 65 is an N6-acetyllysine (Lys65). Positions 69-75 are cys-loop; that stretch reads VPGDGNC. The active site involves Asp72. Cys75 acts as the Nucleophile in catalysis. N6-acetyllysine occurs at positions 121 and 128. The segment at 126 to 136 is variable-loop; that stretch reads LSKPGTFAGND. The tract at residues 176 to 181 is his-loop; it reads YRYGEH. Residue His181 is part of the active site. An N6-acetyllysine modification is found at Lys219. In terms of domain architecture, UBA-like spans 229-269; sequence DDVEDAVHKVGSATGCTDFNLIVQNLEAENYNIKSAITALL. The interval 275-381 is disordered; sequence TGNDAEENHE…RDTGRSEADM (107 aa). Composition is skewed to basic and acidic residues over residues 280–301, 312–331, and 343–379; these read EENHEPGDRVKQRGPSREEAGS, NEGRMETSEARASPAEESKA, and QRREQQRLEKKKRQEERHRLKALENRNGSRDTGRSEA. Lys290 carries the post-translational modification N6-acetyllysine.

Post-translationally, glucose and fatty acids stimulate CREBBP-dependent acetylation, promoting its nuclear translocation.

The protein resides in the cytoplasm. Its subcellular location is the nucleus. It catalyses the reaction Thiol-dependent hydrolysis of ester, thioester, amide, peptide and isopeptide bonds formed by the C-terminal Gly of ubiquitin (a 76-residue protein attached to proteins as an intracellular targeting signal).. Its function is as follows. Deubiquitinating enzyme that hydrolyzes 'Lys-6'- and 'Lys-11'-linked polyubiquitin. Also hydrolyzes heterotypic (mixed and branched) and homotypic chains. Important regulator of energy metabolism. Glucose and fatty acids trigger its nuclear translocation by CBP-dependent acetylation. In the nucleus, deubiquitinates and stabilizes the nuclear receptor PPARD regulating the expression of various genes involved in glucose and lipid metabolism and oxidative phosphorylation. Also acts as a negative regulator of the ribosome quality control (RQC) by mediating deubiquitination of 40S ribosomal proteins RPS10/eS10 and RPS20/uS10, thereby antagonizing ZNF598-mediated 40S ubiquitination. In Mus musculus (Mouse), this protein is OTU domain-containing protein 3 (Otud3).